The primary structure comprises 947 residues: Protocadherin alpha-4 (947 aa).

The signal sequence occupies residues 1-29 (MEFSWGSGQESRRLLLLLLLLAAWEAGNG). 6 consecutive Cadherin domains span residues 30–133 (QLHY…PPVF), 134–242 (PATQ…APAF), 243–350 (DRTI…VPDL), 351–455 (EFKS…APAF), 456–565 (AQPE…APAL), and 588–678 (GHVV…APKA). The Extracellular segment spans residues 30–697 (QLHYSVSEEA…GPDAALVDVN (668 aa)). C96 and C102 are disulfide-bonded. Residues N139, N257, and N265 are each glycosylated (N-linked (GlcNAc...) asparagine). N-linked (GlcNAc...) asparagine glycosylation is present at N548. The helical transmembrane segment at 698–718 (VYLIIAICAVSSLLVLTLLLY) threads the bilayer. The Cytoplasmic portion of the chain corresponds to 719–947 (TALRCSALPT…GNSTTDNSDQ (229 aa)). 6 PXXP repeats span residues 734–737 (PGKP), 774–777 (PSLP), 796–799 (PRQP), 829–832 (PGGP), 870–873 (PGNP), and 888–891 (PGSP). The tract at residues 734–891 (PGKPTLVCSS…PDKFIIPGSP (158 aa)) is 6 X 4 AA repeats of P-X-X-P. A required for interaction with FYN region spans residues 738–947 (TLVCSSAVGS…GNSTTDNSDQ (210 aa)). 3 disordered regions span residues 754–805 (RRPR…DWRY), 828–853 (GPGGPDQQWPTVSSATPEPEAGEVSP), and 868–947 (YGPG…NSDQ). Over residues 906-920 (DKSDFITFGKKEETK) the composition is skewed to basic and acidic residues.

In terms of assembly, forms homodimers in trans (molecules expressed by two different cells). Forms promiscuous heterodimers in cis (at the plasma membrane of the same cell) with other protocadherins. Interacts with FYN.

The protein resides in the cell membrane. Functionally, calcium-dependent cell-adhesion protein involved in cells self-recognition and non-self discrimination. Thereby, it is involved in the establishment and maintenance of specific neuronal connections in the brain. The chain is Protocadherin alpha-4 from Homo sapiens (Human).